Here is a 583-residue protein sequence, read N- to C-terminus: Aspartate--tRNA ligase (583 aa).

Position 174 (Glu174) interacts with L-aspartate. Positions 198 to 201 (QTFK) are aspartate. Arg220 lines the L-aspartate pocket. Residues 220 to 222 (RDE) and Gln229 contribute to the ATP site. Residue His445 participates in L-aspartate binding. ATP is bound at residue Glu479. L-aspartate is bound at residue Arg486. Residue 531-534 (GLDR) coordinates ATP.

This sequence belongs to the class-II aminoacyl-tRNA synthetase family. Type 1 subfamily. In terms of assembly, homodimer.

The protein resides in the cytoplasm. The catalysed reaction is tRNA(Asp) + L-aspartate + ATP = L-aspartyl-tRNA(Asp) + AMP + diphosphate. Functionally, catalyzes the attachment of L-aspartate to tRNA(Asp) in a two-step reaction: L-aspartate is first activated by ATP to form Asp-AMP and then transferred to the acceptor end of tRNA(Asp). The chain is Aspartate--tRNA ligase from Flavobacterium psychrophilum (strain ATCC 49511 / DSM 21280 / CIP 103535 / JIP02/86).